The chain runs to 384 residues: Mitogen-activated protein kinase 8 (384 aa).

The Protein kinase domain maps to 26-321 (YQNLKPIGSG…VDEALQHPYI (296 aa)). ATP-binding positions include 32–40 (IGSGAQGIV) and lysine 55. S-nitrosocysteine is present on cysteine 116. Aspartate 151 serves as the catalytic Proton acceptor. A Phosphothreonine; by MAP2K7 modification is found at threonine 183. The short motif at 183-185 (TPY) is the TXY element. At tyrosine 185 the chain carries Phosphotyrosine; by MAP2K4. Serine 377 carries the post-translational modification Phosphoserine.

This sequence belongs to the protein kinase superfamily. CMGC Ser/Thr protein kinase family. MAP kinase subfamily. Binds to at least four scaffolding proteins, MAPK8IP1/JIP-1, MAPK8IP2/JIP-2, MAPK8IP3/JIP-3/JSAP1 and SPAG9/MAPK8IP4/JIP-4. These proteins also bind other components of the JNK signaling pathway. Forms a complex with MAPK8IP1 and ARHGEF28. Interacts with TP53 and WWOX. Interacts with JAMP. Interacts with NFATC4. Interacts with MECOM; regulates JNK signaling. Interacts with PIN1; this interaction mediates MAPK8 conformational changes leading to the binding of MAPK8 to its substrates. Interacts with HSF1 (via D domain and preferentially with hyperphosphorylated form); this interaction occurs under both normal growth conditions and immediately upon heat shock. Interacts (phosphorylated form) with NFE2; the interaction phosphorylates NFE2 in undifferentiated cells. Interacts with GRIPAP1. Interacts with POU5F1; phosphorylates POU5F1 at 'Ser-347'. Found in a complex with SH3RF1, RAC1, MAP3K11/MLK3, MAP2K7/MKK7 and MAPK8IP1/JIP1. Found in a complex with SH3RF1, RAC2, MAP3K7/TAK1, MAP2K7/MKK7, MAPK8IP1/JIP1 and MAPK9/JNK2. The cofactor is Mg(2+). In terms of processing, phosphorylated by TAOK2. Dually phosphorylated on Thr-183 and Tyr-185 by MAP2K7 and MAP2K4, which activates the enzyme. May be phosphorylated at Thr-183 and Tyr-185 by MAP3K1/MEKK1. Phosphorylated form is more concentrated at synapses than none-phosphorylated. In terms of tissue distribution, brain (at protein level).

The protein resides in the cytoplasm. It is found in the nucleus. It localises to the synapse. The catalysed reaction is L-seryl-[protein] + ATP = O-phospho-L-seryl-[protein] + ADP + H(+). It catalyses the reaction L-threonyl-[protein] + ATP = O-phospho-L-threonyl-[protein] + ADP + H(+). With respect to regulation, inhibited by SERPINB3. Activated by threonine and tyrosine phosphorylation by either of two dual specificity kinases, MAP2K4 and MAP2K7. MAP2K4 shows a strong preference for Tyr-185 while MAP2K7 phosphorylates Tyr-183 preferentially. Inhibited by dual specificity phosphatases, such as DUSP1. Its function is as follows. Serine/threonine-protein kinase involved in various processes such as cell proliferation, differentiation, migration, transformation and programmed cell death. Extracellular stimuli such as pro-inflammatory cytokines or physical stress stimulate the stress-activated protein kinase/c-Jun N-terminal kinase (SAP/JNK) signaling pathway. In this cascade, two dual specificity kinases MAP2K4/MKK4 and MAP2K7/MKK7 phosphorylate and activate MAPK8/JNK1. In turn, MAPK8/JNK1 phosphorylates a number of transcription factors, primarily components of AP-1 such as JUN, JDP2 and ATF2 and thus regulates AP-1 transcriptional activity. Phosphorylates the replication licensing factor CDT1, inhibiting the interaction between CDT1 and the histone H4 acetylase HBO1 to replication origins. Loss of this interaction abrogates the acetylation required for replication initiation. Promotes stressed cell apoptosis by phosphorylating key regulatory factors including p53/TP53 and Yes-associates protein YAP1. In T-cells, MAPK8 and MAPK9 are required for polarized differentiation of T-helper cells into Th1 cells. Contributes to the survival of erythroid cells by phosphorylating the antagonist of cell death BAD upon EPO stimulation. Mediates starvation-induced BCL2 phosphorylation, BCL2 dissociation from BECN1, and thus activation of autophagy. Phosphorylates STMN2 and hence regulates microtubule dynamics, controlling neurite elongation in cortical neurons. In the developing brain, through its cytoplasmic activity on STMN2, negatively regulates the rate of exit from multipolar stage and of radial migration from the ventricular zone. Phosphorylates several other substrates including heat shock factor protein 4 (HSF4), the deacetylase SIRT1, ELK1, or the E3 ligase ITCH. Phosphorylates the CLOCK-BMAL1 heterodimer and plays a role in the regulation of the circadian clock. Phosphorylates the heat shock transcription factor HSF1, suppressing HSF1-induced transcriptional activity. Phosphorylates POU5F1, which results in the inhibition of POU5F1's transcriptional activity and enhances its proteasomal degradation. Phosphorylates JUND and this phosphorylation is inhibited in the presence of MEN1. In neurons, phosphorylates SYT4 which captures neuronal dense core vesicles at synapses. Phosphorylates EIF4ENIF1/4-ET in response to oxidative stress, promoting P-body assembly. Phosphorylates SIRT6 in response to oxidative stress, stimulating its mono-ADP-ribosyltransferase activity. Phosphorylates NLRP3, promoting assembly of the NLRP3 inflammasome. Phosphorylates ALKBH5 in response to reactive oxygen species (ROS), promoting ALKBH5 sumoylation and inactivation. This chain is Mitogen-activated protein kinase 8 (Mapk8), found in Mus musculus (Mouse).